Consider the following 185-residue polypeptide: Elongation factor P (185 aa).

This sequence belongs to the elongation factor P family.

It localises to the cytoplasm. It functions in the pathway protein biosynthesis; polypeptide chain elongation. Its function is as follows. Involved in peptide bond synthesis. Stimulates efficient translation and peptide-bond synthesis on native or reconstituted 70S ribosomes in vitro. Probably functions indirectly by altering the affinity of the ribosome for aminoacyl-tRNA, thus increasing their reactivity as acceptors for peptidyl transferase. The protein is Elongation factor P of Lachnoclostridium phytofermentans (strain ATCC 700394 / DSM 18823 / ISDg) (Clostridium phytofermentans).